A 73-amino-acid polypeptide reads, in one-letter code: DNA-directed RNA polymerase subunit omega (73 aa).

This sequence belongs to the RNA polymerase subunit omega family. The RNAP catalytic core consists of 2 alpha, 1 beta, 1 beta' and 1 omega subunit. When a sigma factor is associated with the core the holoenzyme is formed, which can initiate transcription.

The enzyme catalyses RNA(n) + a ribonucleoside 5'-triphosphate = RNA(n+1) + diphosphate. Its function is as follows. Promotes RNA polymerase assembly. Latches the N- and C-terminal regions of the beta' subunit thereby facilitating its interaction with the beta and alpha subunits. This is DNA-directed RNA polymerase subunit omega from Maridesulfovibrio salexigens (strain ATCC 14822 / DSM 2638 / NCIMB 8403 / VKM B-1763) (Desulfovibrio salexigens).